A 540-amino-acid chain; its full sequence is Glucose-6-phosphate isomerase (540 aa).

Catalysis depends on Glu-350, which acts as the Proton donor. Residues His-381 and Lys-503 contribute to the active site.

It belongs to the GPI family.

The protein localises to the cytoplasm. It carries out the reaction alpha-D-glucose 6-phosphate = beta-D-fructose 6-phosphate. It participates in carbohydrate biosynthesis; gluconeogenesis. Its pathway is carbohydrate degradation; glycolysis; D-glyceraldehyde 3-phosphate and glycerone phosphate from D-glucose: step 2/4. Catalyzes the reversible isomerization of glucose-6-phosphate to fructose-6-phosphate. This chain is Glucose-6-phosphate isomerase, found in Burkholderia pseudomallei (strain 1106a).